The sequence spans 330 residues: LIM domain-containing protein pin-2 (330 aa).

5 consecutive LIM zinc-binding domains span residues 21–73 (CERC…CEHD), 82–132 (CAKC…CFLC), 144–194 (CNKC…CPRC), 202–255 (CFDC…CRDD), and 264–315 (CFIC…CKKC).

Expressed in neurons and intestine.

The protein resides in the cytoplasm. It is found in the nucleus. This chain is LIM domain-containing protein pin-2 (pin-2), found in Caenorhabditis elegans.